The chain runs to 86 residues: Large ribosomal subunit protein uL23 (86 aa).

This sequence belongs to the universal ribosomal protein uL23 family. Part of the 50S ribosomal subunit. Contacts protein L29.

Binds to 23S rRNA. One of the proteins that surrounds the polypeptide exit tunnel on the outside of the ribosome. The sequence is that of Large ribosomal subunit protein uL23 from Caldivirga maquilingensis (strain ATCC 700844 / DSM 13496 / JCM 10307 / IC-167).